The primary structure comprises 289 residues: Serine/threonine-protein phosphatase Pgam5, mitochondrial (289 aa).

Residues 7 to 23 (FACGTGAGLAAYYLQRL) form a helical membrane-spanning segment.

The protein belongs to the phosphoglycerate mutase family. BPG-dependent PGAM subfamily. In terms of assembly, interacts with Pk92B/ASK1.

It is found in the mitochondrion outer membrane. The enzyme catalyses O-phospho-L-seryl-[protein] + H2O = L-seryl-[protein] + phosphate. It catalyses the reaction O-phospho-L-threonyl-[protein] + H2O = L-threonyl-[protein] + phosphate. In terms of biological role, displays phosphatase activity for serine/threonine residues, and dephosphorylates and activates Pk92B kinase. Has apparently no phosphoglycerate mutase activity. The sequence is that of Serine/threonine-protein phosphatase Pgam5, mitochondrial from Drosophila simulans (Fruit fly).